The sequence spans 118 residues: Large ribosomal subunit protein bL20 (118 aa).

This sequence belongs to the bacterial ribosomal protein bL20 family.

Its function is as follows. Binds directly to 23S ribosomal RNA and is necessary for the in vitro assembly process of the 50S ribosomal subunit. It is not involved in the protein synthesizing functions of that subunit. This Parvibaculum lavamentivorans (strain DS-1 / DSM 13023 / NCIMB 13966) protein is Large ribosomal subunit protein bL20.